The sequence spans 665 residues: Auxin response factor 1 (665 aa).

A DNA-binding region (TF-B3) is located at residues 124 to 226 (FCKTLTASDT…ELRVGVRRHM (103 aa)). Disordered regions lie at residues 356 to 408 (VANS…SVPL), 496 to 542 (PVPS…RQIR), and 645 to 665 (KADA…AGSR). 3 stretches are compositionally biased toward polar residues: residues 497–519 (VPSN…SDIP), 530–542 (LRSP…RQIR), and 651–665 (NGNT…AGSR). The PB1 domain maps to 542–635 (RSCTKVHMQG…EVKKLSPKNK (94 aa)).

This sequence belongs to the ARF family. As to quaternary structure, homodimers and heterodimers. Interacts with the auxin-responsive proteins IAA12, IAA13, IAA17 and with ARF2. Binds to RIN13 in the nucleus. Expressed in the whole plant.

It localises to the nucleus. Its subcellular location is the cytoplasm. Functionally, auxin response factors (ARFs) are transcriptional factors that bind specifically to the DNA sequence 5'-TGTCTC-3' found in the auxin-responsive promoter elements (AuxREs). Seems to act as transcriptional repressor. Formation of heterodimers with Aux/IAA proteins may alter their ability to modulate early auxin response genes expression. Promotes flowering, stamen development, floral organ abscission and fruit dehiscence. Acts as a repressor of IAA2, IAA3 and IAA7. Together with RIN13, promotes leaf senescence and cell death. This chain is Auxin response factor 1, found in Arabidopsis thaliana (Mouse-ear cress).